The chain runs to 378 residues: MIDSRADHGLRFGIEEEFFLLDATDLDIARTAPSGFLEACRAALGEHFAEEMFECQVEVASPVFADLAQAARFHGRARQRLAQLAAGFGLRALCVGTHPFADWRRARSNPAAHFARLFEDQGRVARRSLVCGLHVHVEIPASHDRMVVLQQVLPWLPLLLALSASSPFRGGRRSGLASYRRALCGEWPRMNIPPALPDEDAYRRHLALLRESGCIREDGQVWWMVRPSSHVPTLELRICDACPRLADALCLAGLFRALVGQALLAGDAPAGPAARDACLEENYWQAMRHGCAGRYLVDGRCVNARDWLERAWRQCHPQARQGNEWAYGHAQRLLEENSADRQLQRYQALRAEGRGRQAALRRLVEELLEENLQALPAI.

Belongs to the glutamate--cysteine ligase type 2 family. YbdK subfamily.

It carries out the reaction L-cysteine + L-glutamate + ATP = gamma-L-glutamyl-L-cysteine + ADP + phosphate + H(+). ATP-dependent carboxylate-amine ligase which exhibits weak glutamate--cysteine ligase activity. This is Putative glutamate--cysteine ligase 2 from Pseudomonas paraeruginosa (strain DSM 24068 / PA7) (Pseudomonas aeruginosa (strain PA7)).